A 202-amino-acid polypeptide reads, in one-letter code: Secreted RxLR effector protein 11 (202 aa).

A signal peptide spans 1–23 (MRLNFTKLFAGAVALAWTTESMA). A RxLR-dEER motif is present at residues 49-61 (RRLRTINGADEER).

Belongs to the RxLR effector family.

Its subcellular location is the secreted. The protein resides in the host cytoplasm. It localises to the host nucleus. In terms of biological role, effector that acts as a broad suppressor of cell death to interrupt plant immunity. Inhibits cell death induced by cell death-inducing proteins, including the PAMP elicitor INF1 from P.infestans. This Plasmopara viticola (Downy mildew of grapevine) protein is Secreted RxLR effector protein 11.